Consider the following 480-residue polypeptide: Histone deacetylase 1 (480 aa).

Positions 9–321 are histone deacetylase; that stretch reads RKVCYYYDGD…WTYETAVALD (313 aa). 1D-myo-inositol 1,4,5,6-tetrakisphosphate is bound by residues Gly27 and Lys31. Residue His141 is part of the active site. 3 residues coordinate Zn(2+): Asp176, His178, and Asp264. Arg270 contacts 1D-myo-inositol 1,4,5,6-tetrakisphosphate. The tract at residues 376 to 480 is disordered; the sequence is APGVQMQPIP…KGVKEETKST (105 aa). A compositionally biased stretch (acidic residues) spans 388–400; sequence AVQEDSGDEEEED. The segment covering 401–416 has biased composition (basic and acidic residues); sequence PEKRISIRNSDKRISC. Residues 417 to 427 show a composition bias toward acidic residues; sequence DEEFSDSEDEG. Residues 455–480 show a composition bias toward basic and acidic residues; the sequence is KDEKEEEKAKEEKAEPKGVKEETKST.

The protein belongs to the histone deacetylase family. HD type 1 subfamily. The cofactor is Zn(2+).

The protein resides in the nucleus. The catalysed reaction is N(6)-acetyl-L-lysyl-[histone] + H2O = L-lysyl-[histone] + acetate. It carries out the reaction N(6)-acetyl-L-lysyl-[protein] + H2O = L-lysyl-[protein] + acetate. It catalyses the reaction N(6)-(2E)-butenoyl-L-lysyl-[protein] + H2O = (2E)-2-butenoate + L-lysyl-[protein]. The enzyme catalyses N(6)-[(S)-lactoyl]-L-lysyl-[protein] + H2O = (S)-lactate + L-lysyl-[protein]. With respect to regulation, inositol tetraphosphate (1D-myo-inositol 1,4,5,6-tetrakisphosphate) may act as an intermolecular glue between HDAC1 and N-Cor repressor complex components. In terms of biological role, histone deacetylase that catalyzes the deacetylation of lysine residues on the N-terminal part of the core histones (H2A, H2B, H3 and H4). Histone deacetylation gives a tag for epigenetic repression and plays an important role in transcriptional regulation, cell cycle progression and developmental events. Histone deacetylases act via the formation of large multiprotein complexes. Also functions as a deacetylase for non-histone proteins. In addition to protein deacetylase activity, also has protein-lysine deacylase activity: acts as a protein decrotonylase and delactylase by mediating decrotonylation ((2E)-butenoyl) and delactylation (lactoyl) of histones, respectively. In Gallus gallus (Chicken), this protein is Histone deacetylase 1 (HDAC1).